The chain runs to 259 residues: Protein unc-50 homolog (259 aa).

Positions 1-15 (MLPTSSPQIHRNGSL) are enriched in polar residues. The tract at residues 1–22 (MLPTSSPQIHRNGSLSERDAAR) is disordered. At 1 to 80 (MLPTSSPQIH…TKDQWARDDP (80 aa)) the chain is on the cytoplasmic side. Residues 81–101 (AFLVLLSIWLCVSTVGFGLVL) form a helical membrane-spanning segment. The Lumenal portion of the chain corresponds to 102–110 (DMGFVETLT). Residues 111-131 (LLLWVVFIDCIGVGLLISTLM) traverse the membrane as a helical segment. Over 132–162 (WFVTNKYLMKHPNRDYDVEWGYAFDVHLNAF) the chain is Cytoplasmic. A helical membrane pass occupies residues 163-183 (YPLLVILHFLQLFFINHVVVI). Over 184–198 (SSDWFLGYFVGNTMW) the chain is Lumenal. A helical membrane pass occupies residues 199-219 (LIAIGYYVYITFLGYSALPFL). The Cytoplasmic portion of the chain corresponds to 220–222 (KNT). The chain crosses the membrane as a helical span at residues 223-243 (VVLLYPFALLGLLYVLSISLG). Over 244 to 259 (WNFTKGLCWFYKHRVQ) the chain is Lumenal.

It belongs to the unc-50 family.

It is found in the nucleus inner membrane. It localises to the golgi apparatus membrane. In terms of biological role, involved in the cell surface expression of neuronal nicotinic receptors. Binds RNA. This Danio rerio (Zebrafish) protein is Protein unc-50 homolog (unc50).